Consider the following 375-residue polypeptide: Eukaryotic translation initiation factor 3 subunit F (375 aa).

The 137-residue stretch at 30 to 166 folds into the MPN domain; the sequence is VVIQPQALFS…TRAYISAPVG (137 aa). The segment at 307–375 is disordered; sequence LGGESGSGES…EAQNGKEEKK (69 aa). The segment covering 323–332 has biased composition (gly residues); it reads QRGGKGGRGG. Basic and acidic residues-rich tracts occupy residues 336-345 and 358-375; these read TQERSGEEAR and RSYE…EEKK.

It belongs to the eIF-3 subunit F family. Component of the eukaryotic translation initiation factor 3 (eIF-3) complex.

It is found in the cytoplasm. Component of the eukaryotic translation initiation factor 3 (eIF-3) complex, which is involved in protein synthesis of a specialized repertoire of mRNAs and, together with other initiation factors, stimulates binding of mRNA and methionyl-tRNAi to the 40S ribosome. The eIF-3 complex specifically targets and initiates translation of a subset of mRNAs involved in cell proliferation. This is Eukaryotic translation initiation factor 3 subunit F from Aspergillus niger (strain ATCC MYA-4892 / CBS 513.88 / FGSC A1513).